The primary structure comprises 207 residues: Small ribosomal subunit protein uS4 (207 aa).

The disordered stretch occupies residues 35–54 (RPKPPGPQLGRPRRLSDRGQ). In terms of domain architecture, S4 RNA-binding spans 97–163 (RRLDNVLFRL…AYFKTLAENI (67 aa)).

It belongs to the universal ribosomal protein uS4 family. As to quaternary structure, part of the 30S ribosomal subunit. Contacts protein S5. The interaction surface between S4 and S5 is involved in control of translational fidelity.

One of the primary rRNA binding proteins, it binds directly to 16S rRNA where it nucleates assembly of the body of the 30S subunit. In terms of biological role, with S5 and S12 plays an important role in translational accuracy. The sequence is that of Small ribosomal subunit protein uS4 from Dehalococcoides mccartyi (strain CBDB1).